The chain runs to 471 residues: Tumor necrosis factor receptor superfamily member 1A (471 aa).

The first 29 residues, 1–29 (MGLPTVPGLLLPLVLPALLADVYPAGVQG), serve as a signal peptide directing secretion. At 30–210 (LVPHPGDLEK…GKDSQDPGTT (181 aa)) the chain is on the extracellular side. TNFR-Cys repeat units follow at residues 43-82 (PCPQ…TDCR), 83-125 (VCAP…DTVC), 126-166 (GCRK…DTIC), and 167-195 (HCHM…KLCP). Disulfide bonds link Cys-44/Cys-58, Cys-59/Cys-72, Cys-62/Cys-81, Cys-84/Cys-99, Cys-102/Cys-117, Cys-105/Cys-125, and Cys-127/Cys-143. Residue Asn-54 is glycosylated (N-linked (GlcNAc...) asparagine). 2 N-linked (GlcNAc...) asparagine glycosylation sites follow: Asn-145 and Asn-151. Cystine bridges form between Cys-146-Cys-158, Cys-149-Cys-166, Cys-168-Cys-179, Cys-182-Cys-194, and Cys-185-Cys-190. Residues 211–233 (VLLPLVIVFGLCLASFASVVLAC) form a helical membrane-spanning segment. Residues 234–471 (RYQRWKPKLY…RLASEPRLLW (238 aa)) are Cytoplasmic-facing. The interval 340-360 (TPGPPASTHLCTPVQKWEASA) is N-SMase activation domain (NSD). Residues 372–457 (PATLYAVVDG…GCLENIEEAL (86 aa)) enclose the Death domain.

Binding of TNF to the extracellular domain leads to homotrimerization. The aggregated death domains provide a novel molecular interface that interacts specifically with the death domain of TRADD. Various TRADD-interacting proteins such as TRAFS, RIPK1 and possibly FADD, are recruited to the complex by their association with TRADD. This complex activates at least two distinct signaling cascades, apoptosis and NF-kappa-B signaling. Interacts with BAG4, BABAM2, FEM1B, GRB2, SQSTM1 and TRPC4AP. Interacts directly with NOL3 (via CARD domain); inhibits TNF-signaling pathway. Interacts with SH3RF2, TRADD and RIPK1. SH3RF2 facilitates the recruitment of RIPK1 and TRADD to TNFRSF1A in a TNF-alpha-dependent process. Interacts with PGLYRP1; this interaction is important for cell death induction. Interacts (via death domain) with MADD (via death domain).

Its subcellular location is the cell membrane. The protein resides in the golgi apparatus membrane. In terms of biological role, receptor for TNFSF2/TNF-alpha and homotrimeric TNFSF1/lymphotoxin-alpha. The adapter molecule FADD recruits caspase-8 to the activated receptor. The resulting death-inducing signaling complex (DISC) performs caspase-8 proteolytic activation which initiates the subsequent cascade of caspases (aspartate-specific cysteine proteases) mediating apoptosis. This is Tumor necrosis factor receptor superfamily member 1A (TNFRSF1A) from Bos taurus (Bovine).